Here is a 490-residue protein sequence, read N- to C-terminus: Doublesex- and mab-3-related transcription factor A1 (490 aa).

The span at 1 to 13 (MERLPHGRRDRSG) shows a compositional bias: basic and acidic residues. The disordered stretch occupies residues 1–31 (MERLPHGRRDRSGGCRPHLAPGRAAAPASAA). Positions 20 to 31 (APGRAAAPASAA) are enriched in low complexity. Positions 86 to 133 (CARCRNHGVVSALKGHKRFCRWRDCACAKCTLIAERQRVMAAQVALRR) form a DNA-binding region, DM. Disordered stretches follow at residues 152-171 (GSSGSGAQASGGSGRTESPQ) and 207-289 (DRKQ…DLES). Over residues 207–216 (DRKQEPKQRN) the composition is skewed to basic and acidic residues. Composition is skewed to polar residues over residues 217 to 242 (CESCQSRQEEPVSNTHHHSLGSSKGN) and 269 to 289 (PTDQSGGEDSPRSFSSSDLES). One can recognise a DMA domain in the interval 314 to 349 (RDPLGILTRIFPGYKHSRLEGILQFCKGDVVQAIEQ).

It belongs to the DMRT family. In terms of tissue distribution, widely expressed, with highest levels in ovary, testis, epididymis, preputial gland, vomeronasal organ, liver, salivary glands and heart. Also expressed throughout the brain with highest levels in the olfactory bulbs and medulla. Detected at similar levels in gonads of both sexes.

It is found in the nucleus. This Mus musculus (Mouse) protein is Doublesex- and mab-3-related transcription factor A1 (Dmrta1).